The chain runs to 694 residues: Elongation factor G (694 aa).

The tr-type G domain maps to 8–287 (EDYRNFGIMA…AVVEFLPAPT (280 aa)). GTP contacts are provided by residues 17-24 (AHIDAGKT), 86-90 (DTPGH), and 140-143 (NKMD).

The protein belongs to the TRAFAC class translation factor GTPase superfamily. Classic translation factor GTPase family. EF-G/EF-2 subfamily.

The protein resides in the cytoplasm. Its function is as follows. Catalyzes the GTP-dependent ribosomal translocation step during translation elongation. During this step, the ribosome changes from the pre-translocational (PRE) to the post-translocational (POST) state as the newly formed A-site-bound peptidyl-tRNA and P-site-bound deacylated tRNA move to the P and E sites, respectively. Catalyzes the coordinated movement of the two tRNA molecules, the mRNA and conformational changes in the ribosome. The chain is Elongation factor G from Brucella melitensis biotype 2 (strain ATCC 23457).